The sequence spans 124 residues: Small ribosomal subunit protein uS12 (124 aa).

3-methylthioaspartic acid is present on Asp-89.

The protein belongs to the universal ribosomal protein uS12 family. As to quaternary structure, part of the 30S ribosomal subunit. Contacts proteins S8 and S17. May interact with IF1 in the 30S initiation complex.

In terms of biological role, with S4 and S5 plays an important role in translational accuracy. Its function is as follows. Interacts with and stabilizes bases of the 16S rRNA that are involved in tRNA selection in the A site and with the mRNA backbone. Located at the interface of the 30S and 50S subunits, it traverses the body of the 30S subunit contacting proteins on the other side and probably holding the rRNA structure together. The combined cluster of proteins S8, S12 and S17 appears to hold together the shoulder and platform of the 30S subunit. This chain is Small ribosomal subunit protein uS12, found in Treponema pallidum subsp. pallidum (strain SS14).